The following is a 412-amino-acid chain: Putative competence-damage inducible protein (412 aa).

It belongs to the CinA family.

In Bacillus cereus (strain Q1), this protein is Putative competence-damage inducible protein.